The primary structure comprises 359 residues: Peptide chain release factor 1 (359 aa).

At glutamine 235 the chain carries N5-methylglutamine.

This sequence belongs to the prokaryotic/mitochondrial release factor family. Methylated by PrmC. Methylation increases the termination efficiency of RF1.

It is found in the cytoplasm. In terms of biological role, peptide chain release factor 1 directs the termination of translation in response to the peptide chain termination codons UAG and UAA. The sequence is that of Peptide chain release factor 1 from Anaplasma phagocytophilum (strain HZ).